We begin with the raw amino-acid sequence, 749 residues long: MEKSAAGDNIDKYSPSSIPDYDTEFLNPDDLRAFEKALTDQDADPLVALNDWRPVYQRVVRRGRGRRKSAAAAPRRTKDETREGVLYTVLKWPFLLFVLGWITFLSVGYALTRIYIFLYEQWVTWRGKRESLRRELYKHENYDDWLHAAQALDEYLGNQRWKKIDEYAYYDHLTIRKLGRQLRTVRMQVEEEMKRGESGSTVVVEELCNLLEACVKANFAGVENPRLYSEAYSGTKDLVQDYIDEVHACVKVITDSRQARNEEKYSHFKHLDTNFGRTALCLSGGATFAYYHFGVVRALLDNEVLPSIITGTSGGALVAALVGTRTDDELKQLLVPALAHKIKACSEGFTTWARRWWRTGARFDTMDWARQCSWFCRGSTTFREAYERTGRILNVSCVPSDPHSPTILANYLTSPNCVIWSAVLASAAVPGILNPVVLMTKKRDGTLAPYSFGHKWKDGSLRTDIPIKALNLHFNVNFTIVSQVNPHINLFFFSSRGAVGRPVTHRKGRGWRGGFLGSAIEQYIKLDLNKWLKVLRHLELLPRPLGQDWSEIWLQKFSGTVTIWPKTVPSDFYHILSDPSPERLARMLRTGQQSTFPKIQFIKNRLKIEYAILEGLHRFSADGESVGATSIQPFPFDNGAAGADQKSNDPREERLNRNFPERSSEYSYDYVKSFSDFSDDPIVSAENSSVDDNYIVPSRQRDAGAEAGVGTGTAERRGSFSSLFNLEEMRRQSAVFFDDPDLYRDGGDL.

A compositionally biased stretch (basic and acidic residues) spans 1–11 (MEKSAAGDNID). The interval 1 to 21 (MEKSAAGDNIDKYSPSSIPDY) is disordered. The helical transmembrane segment at 92-112 (WPFLLFVLGWITFLSVGYALT) threads the bilayer. The PNPLA domain maps to 280-471 (LCLSGGATFA…RTDIPIKALN (192 aa)). The GXSXG signature appears at 311-315 (GTSGG). Ser-313 serves as the catalytic Nucleophile. The Proton acceptor role is filled by Asp-458. Residues 630 to 659 (SIQPFPFDNGAAGADQKSNDPREERLNRNF) form a disordered region. Basic and acidic residues predominate over residues 646 to 659 (KSNDPREERLNRNF).

This sequence belongs to the PLPL family.

The protein resides in the membrane. In terms of biological role, probable lipid hydrolase. In Emericella nidulans (strain FGSC A4 / ATCC 38163 / CBS 112.46 / NRRL 194 / M139) (Aspergillus nidulans), this protein is Patatin-like phospholipase domain-containing protein AN0408.